The sequence spans 363 residues: Flagellar P-ring protein (363 aa).

Residues 1–20 (MKLKLILAVAMLAFSLPSQA) form the signal peptide.

The protein belongs to the FlgI family. The basal body constitutes a major portion of the flagellar organelle and consists of four rings (L,P,S, and M) mounted on a central rod.

It is found in the periplasm. The protein localises to the bacterial flagellum basal body. In terms of biological role, assembles around the rod to form the L-ring and probably protects the motor/basal body from shearing forces during rotation. This is Flagellar P-ring protein from Shewanella sp. (strain MR-4).